The sequence spans 323 residues: tRNA U34 carboxymethyltransferase (323 aa).

Carboxy-S-adenosyl-L-methionine contacts are provided by residues Lys-91, Trp-105, Lys-110, Gly-130, 181-182, Met-196, Tyr-200, and Arg-315; that span reads IE.

It belongs to the class I-like SAM-binding methyltransferase superfamily. CmoB family. In terms of assembly, homotetramer.

It carries out the reaction carboxy-S-adenosyl-L-methionine + 5-hydroxyuridine(34) in tRNA = 5-carboxymethoxyuridine(34) in tRNA + S-adenosyl-L-homocysteine + H(+). Functionally, catalyzes carboxymethyl transfer from carboxy-S-adenosyl-L-methionine (Cx-SAM) to 5-hydroxyuridine (ho5U) to form 5-carboxymethoxyuridine (cmo5U) at position 34 in tRNAs. This is tRNA U34 carboxymethyltransferase from Enterobacter sp. (strain 638).